The sequence spans 188 residues: MAMLLNQSQPPQGREGGGTQVGSLGPGIPVGQQQQQLGLQQQQQDFDPVQRYRMLIPQLKESLQNLMKIAAQNLVQNTNIDNGQKNADGLVQRFDKSLEEFYAICDQLELCLRLAYECLSQSYDSAKHSPTLVPTATKPDAVQTESLPYTQYLSMIKSQISCAKDIHNALLECSKKIMGKTPNTQGGL.

Residues 1-11 (MAMLLNQSQPP) are compositionally biased toward polar residues. The tract at residues 1 to 27 (MAMLLNQSQPPQGREGGGTQVGSLGPG) is disordered.

Belongs to the Mediator complex subunit 29 family. As to quaternary structure, component of the Mediator complex.

The protein localises to the nucleus. In terms of biological role, component of the Mediator complex, a coactivator involved in the regulated transcription of nearly all RNA polymerase II-dependent genes. Mediator functions as a bridge to convey information from gene-specific regulatory proteins to the basal RNA polymerase II transcription machinery. Mediator is recruited to promoters by direct interactions with regulatory proteins and serves as a scaffold for the assembly of a functional preinitiation complex with RNA polymerase II and the general transcription factors. This is Mediator of RNA polymerase II transcription subunit 29 (med29) from Xenopus tropicalis (Western clawed frog).